Consider the following 263-residue polypeptide: Cysteine-rich repeat secretory protein 55 (263 aa).

Positions 1-20 are cleaved as a signal peptide; it reads MKTLVVKCFLLLALVCSCRA. Gnk2-homologous domains lie at 22-126 and 132-240; these read DSIW…QENF and TGAG…FYPF.

The protein belongs to the cysteine-rich repeat secretory protein family.

The protein resides in the secreted. This Arabidopsis thaliana (Mouse-ear cress) protein is Cysteine-rich repeat secretory protein 55 (CRRSP55).